We begin with the raw amino-acid sequence, 152 residues long: UPF0178 protein SAB0630c (152 aa).

It belongs to the UPF0178 family.

The chain is UPF0178 protein SAB0630c from Staphylococcus aureus (strain bovine RF122 / ET3-1).